Consider the following 133-residue polypeptide: Small ribosomal subunit protein uS19 (133 aa).

The protein belongs to the universal ribosomal protein uS19 family.

Protein S19 forms a complex with S13 that binds strongly to the 16S ribosomal RNA. This is Small ribosomal subunit protein uS19 (rps19) from Archaeoglobus fulgidus (strain ATCC 49558 / DSM 4304 / JCM 9628 / NBRC 100126 / VC-16).